The primary structure comprises 125 residues: Fluoride-specific ion channel FluC (125 aa).

A run of 4 helical transmembrane segments spans residues 1 to 21, 34 to 54, 72 to 92, and 101 to 121; these read MFAT…ARYG, FPWA…FLFF, TGGL…LVLF, and LLYM…GAWI. 2 residues coordinate Na(+): Gly-76 and Thr-79.

It belongs to the fluoride channel Fluc/FEX (TC 1.A.43) family.

It is found in the cell inner membrane. It catalyses the reaction fluoride(in) = fluoride(out). With respect to regulation, na(+) is not transported, but it plays an essential structural role and its presence is essential for fluoride channel function. Fluoride-specific ion channel. Important for reducing fluoride concentration in the cell, thus reducing its toxicity. The polypeptide is Fluoride-specific ion channel FluC (Acidithiobacillus ferrooxidans (strain ATCC 23270 / DSM 14882 / CIP 104768 / NCIMB 8455) (Ferrobacillus ferrooxidans (strain ATCC 23270))).